The primary structure comprises 137 residues: Nucleoside diphosphate kinase (137 aa).

Residues Lys-9, Phe-58, Arg-86, Thr-92, Arg-103, and Asn-113 each contribute to the ATP site. His-121 acts as the Pros-phosphohistidine intermediate in catalysis.

This sequence belongs to the NDK family. Homotetramer. Mg(2+) serves as cofactor.

The protein resides in the cytoplasm. The enzyme catalyses a 2'-deoxyribonucleoside 5'-diphosphate + ATP = a 2'-deoxyribonucleoside 5'-triphosphate + ADP. It catalyses the reaction a ribonucleoside 5'-diphosphate + ATP = a ribonucleoside 5'-triphosphate + ADP. Its function is as follows. Major role in the synthesis of nucleoside triphosphates other than ATP. The ATP gamma phosphate is transferred to the NDP beta phosphate via a ping-pong mechanism, using a phosphorylated active-site intermediate. This Streptococcus pneumoniae (strain Hungary19A-6) protein is Nucleoside diphosphate kinase.